The chain runs to 106 residues: MMKVLVVAALLVTLISYSSSEGIDDLEADELLSLMANEQTRAKACTPRYYDCSHDRHSCCRSSMFKDVCTCFYPEGGDNKEVCTCQQPKHLKYMEKATDKIKNLFG.

The first 20 residues, 1 to 20, serve as a signal peptide directing secretion; sequence MMKVLVVAALLVTLISYSSS. A propeptide spanning residues 21–41 is cleaved from the precursor; it reads EGIDDLEADELLSLMANEQTR. Disulfide bonds link Cys45-Cys60, Cys52-Cys69, Cys59-Cys85, and Cys71-Cys83.

It belongs to the neurotoxin 19 (CSTX) family. 02 (D7) subfamily. As to expression, expressed by the venom gland.

It localises to the secreted. This is Toxin-like structure LSTX-D6 from Lycosa singoriensis (Wolf spider).